Here is a 529-residue protein sequence, read N- to C-terminus: BTB/POZ domain-containing protein 6 (529 aa).

A BTB domain is found at 127–197 (ADVHFIVGPA…LYSDEIDLEA (71 aa)).

In terms of assembly, homodimer and heterodimer. Interacts with cul3 via the BTB domain.

The protein localises to the cytoplasm. Functionally, adapter protein for the cul3 E3 ubiquitin-protein ligase complex. Involved in late neuronal development and muscle formation. The protein is BTB/POZ domain-containing protein 6 (btbd6) of Xenopus laevis (African clawed frog).